Here is a 463-residue protein sequence, read N- to C-terminus: Glutamate--tRNA ligase (463 aa).

The short motif at 10–20 is the 'HIGH' region element; the sequence is PSPTGHLHIGG. The short motif at 236 to 240 is the 'KMSKS' region element; it reads KLSKR. Lysine 239 serves as a coordination point for ATP.

The protein belongs to the class-I aminoacyl-tRNA synthetase family. Glutamate--tRNA ligase type 1 subfamily. In terms of assembly, monomer.

It localises to the cytoplasm. It carries out the reaction tRNA(Glu) + L-glutamate + ATP = L-glutamyl-tRNA(Glu) + AMP + diphosphate. Its function is as follows. Catalyzes the attachment of glutamate to tRNA(Glu) in a two-step reaction: glutamate is first activated by ATP to form Glu-AMP and then transferred to the acceptor end of tRNA(Glu). This chain is Glutamate--tRNA ligase, found in Nitratidesulfovibrio vulgaris (strain DP4) (Desulfovibrio vulgaris).